We begin with the raw amino-acid sequence, 640 residues long: 1,4-alpha-glucan branching enzyme GlgB (640 aa).

Asp318 acts as the Nucleophile in catalysis. The Proton donor role is filled by Glu371.

It belongs to the glycosyl hydrolase 13 family. GlgB subfamily. Monomer.

It catalyses the reaction Transfers a segment of a (1-&gt;4)-alpha-D-glucan chain to a primary hydroxy group in a similar glucan chain.. Its pathway is glycan biosynthesis; glycogen biosynthesis. Catalyzes the formation of the alpha-1,6-glucosidic linkages in glycogen by scission of a 1,4-alpha-linked oligosaccharide from growing alpha-1,4-glucan chains and the subsequent attachment of the oligosaccharide to the alpha-1,6 position. The polypeptide is 1,4-alpha-glucan branching enzyme GlgB (Francisella tularensis subsp. novicida (strain U112)).